Reading from the N-terminus, the 169-residue chain is Endoribonuclease YbeY (169 aa).

Residues His-128, His-132, and His-138 each coordinate Zn(2+).

It belongs to the endoribonuclease YbeY family. It depends on Zn(2+) as a cofactor.

It localises to the cytoplasm. In terms of biological role, single strand-specific metallo-endoribonuclease involved in late-stage 70S ribosome quality control and in maturation of the 3' terminus of the 16S rRNA. This Cyanothece sp. (strain PCC 7425 / ATCC 29141) protein is Endoribonuclease YbeY.